A 156-amino-acid polypeptide reads, in one-letter code: 17 kDa lipoprotein (156 aa).

The first 21 residues, 1–21 (MKGSVRALCAFLGVGALGSAL), serve as a signal peptide directing secretion. Cys22 carries the N-palmitoyl cysteine lipid modification. Cys22 carries the S-diacylglycerol cysteine lipid modification.

It is found in the cell membrane. In Treponema pallidum (strain Nichols), this protein is 17 kDa lipoprotein (tpp17).